The sequence spans 197 residues: dITP/XTP pyrophosphatase (197 aa).

8–13 (TGNAGK) is a binding site for substrate. 2 residues coordinate Mg(2+): E40 and D69. Catalysis depends on D69, which acts as the Proton acceptor. Residues S70, 154 to 157 (FGYD), K177, and 182 to 183 (HR) each bind substrate.

It belongs to the HAM1 NTPase family. In terms of assembly, homodimer. It depends on Mg(2+) as a cofactor.

It carries out the reaction XTP + H2O = XMP + diphosphate + H(+). It catalyses the reaction dITP + H2O = dIMP + diphosphate + H(+). The catalysed reaction is ITP + H2O = IMP + diphosphate + H(+). Its function is as follows. Pyrophosphatase that catalyzes the hydrolysis of nucleoside triphosphates to their monophosphate derivatives, with a high preference for the non-canonical purine nucleotides XTP (xanthosine triphosphate), dITP (deoxyinosine triphosphate) and ITP. Seems to function as a house-cleaning enzyme that removes non-canonical purine nucleotides from the nucleotide pool, thus preventing their incorporation into DNA/RNA and avoiding chromosomal lesions. This is dITP/XTP pyrophosphatase (rdgB) from Escherichia coli O157:H7.